The following is a 96-amino-acid chain: Small ribosomal subunit protein bS6 (96 aa).

The protein belongs to the bacterial ribosomal protein bS6 family.

Its function is as follows. Binds together with bS18 to 16S ribosomal RNA. In Mycobacteroides abscessus (strain ATCC 19977 / DSM 44196 / CCUG 20993 / CIP 104536 / JCM 13569 / NCTC 13031 / TMC 1543 / L948) (Mycobacterium abscessus), this protein is Small ribosomal subunit protein bS6.